Consider the following 464-residue polypeptide: V-type ATP synthase beta chain (464 aa).

Belongs to the ATPase alpha/beta chains family.

In terms of biological role, produces ATP from ADP in the presence of a proton gradient across the membrane. The V-type beta chain is a regulatory subunit. In Streptococcus gordonii (strain Challis / ATCC 35105 / BCRC 15272 / CH1 / DL1 / V288), this protein is V-type ATP synthase beta chain.